The sequence spans 192 residues: Ion-translocating oxidoreductase complex subunit B (192 aa).

The hydrophobic stretch occupies residues 1–26 (MNAIWIAVAAVSLLALAFGAILGYAS). The 60-residue stretch at 32–91 (EDDPVVEKIDEILPQSQCGQCGYPGCRPYAEAISCNGEKINRCAPGGEAVMLKIAELLNV) folds into the 4Fe-4S domain. [4Fe-4S] cluster contacts are provided by cysteine 49, cysteine 52, cysteine 57, cysteine 74, cysteine 117, cysteine 120, cysteine 123, cysteine 127, cysteine 147, cysteine 150, cysteine 153, and cysteine 157. 4Fe-4S ferredoxin-type domains lie at 108–137 (MVAV…GATR) and 138–167 (AMHT…LQPV).

It belongs to the 4Fe4S bacterial-type ferredoxin family. RnfB subfamily. In terms of assembly, the complex is composed of six subunits: RsxA, RsxB, RsxC, RsxD, RsxE and RsxG. [4Fe-4S] cluster serves as cofactor.

It localises to the cell inner membrane. Part of a membrane-bound complex that couples electron transfer with translocation of ions across the membrane. Required to maintain the reduced state of SoxR. This Escherichia coli O81 (strain ED1a) protein is Ion-translocating oxidoreductase complex subunit B.